Consider the following 355-residue polypeptide: MVRNEKKCIGIIFGGTSNEHYVSISSAKTVFKALISRTNKELFRIKAFYINKHGVWIDSDLSLEILRENSGNNIFEKYQELPNRKINFLNNLEFQNIDIWFPLLHGCNGEDGAIHGLLKFTQKPLIGCGISGSAIGMDKILMKQIFSNLSIPQVNFLAIQNYDLSDDNVKDNLSVEIIEKLNLPVFVKPANSGSSLGISKAKNKSEIIKALQKAWEIDSRIVIEEGLNVRELECGIIGNLKLSTSKIGEVSYSSDWYDYDSKYSTDNKIIIPADIDSQISEQIKDLAIRSCRALNIYGFARVDFFLEKISRKIFLNEINTIPGFTSKSMFPMLWKASGLNIDQLVAKLIDISLDS.

The 208-residue stretch at 143 to 350 (KQIFSNLSIP…IDQLVAKLID (208 aa)) folds into the ATP-grasp domain. 178–233 (IEKLNLPVFVKPANSGSSLGISKAKNKSEIIKALQKAWEIDSRIVIEEGLNVRELE) contributes to the ATP binding site. Mg(2+)-binding residues include Asp-303, Glu-317, and Asn-319.

It belongs to the D-alanine--D-alanine ligase family. Mg(2+) serves as cofactor. Requires Mn(2+) as cofactor.

It is found in the cytoplasm. The enzyme catalyses 2 D-alanine + ATP = D-alanyl-D-alanine + ADP + phosphate + H(+). It participates in cell wall biogenesis; peptidoglycan biosynthesis. Its function is as follows. Cell wall formation. This chain is D-alanine--D-alanine ligase, found in Prochlorococcus marinus (strain MIT 9515).